A 127-amino-acid polypeptide reads, in one-letter code: Aspartate 1-decarboxylase (127 aa).

Catalysis depends on Ser25, which acts as the Schiff-base intermediate with substrate; via pyruvic acid. Position 25 is a pyruvic acid (Ser) (Ser25). A substrate-binding site is contributed by Thr57. Catalysis depends on Tyr58, which acts as the Proton donor. 73–75 contacts substrate; it reads GAA.

It belongs to the PanD family. As to quaternary structure, heterooctamer of four alpha and four beta subunits. Pyruvate serves as cofactor. Is synthesized initially as an inactive proenzyme, which is activated by self-cleavage at a specific serine bond to produce a beta-subunit with a hydroxyl group at its C-terminus and an alpha-subunit with a pyruvoyl group at its N-terminus.

The protein resides in the cytoplasm. The enzyme catalyses L-aspartate + H(+) = beta-alanine + CO2. It functions in the pathway cofactor biosynthesis; (R)-pantothenate biosynthesis; beta-alanine from L-aspartate: step 1/1. Functionally, catalyzes the pyruvoyl-dependent decarboxylation of aspartate to produce beta-alanine. The protein is Aspartate 1-decarboxylase of Aliarcobacter butzleri (strain RM4018) (Arcobacter butzleri).